The primary structure comprises 1338 residues: Phosphoribosylformylglycinamidine synthase (1338 aa).

Position 215 is a phosphoserine (Ser-215). ATP contacts are provided by residues 322 to 333 and 402 to 404; these read GATTGTGGRIRD and AGF. Ser-569 carries the post-translational modification Phosphoserine. Phosphothreonine is present on residues Thr-619 and Thr-623. Residue Ala-706 participates in ATP binding. Mg(2+)-binding residues include Asp-707, Glu-746, Asn-750, and Asp-909. Ser-911 serves as a coordination point for ATP. The 239-residue stretch at 1064 to 1302 folds into the Glutamine amidotransferase type-1 domain; it reads RVAILREEGS…AVMPHPERAV (239 aa). Cys-1158 serves as the catalytic Nucleophile. Catalysis depends on residues His-1297 and Glu-1299.

It in the N-terminal section; belongs to the FGAMS family.

Its subcellular location is the cytoplasm. It carries out the reaction N(2)-formyl-N(1)-(5-phospho-beta-D-ribosyl)glycinamide + L-glutamine + ATP + H2O = 2-formamido-N(1)-(5-O-phospho-beta-D-ribosyl)acetamidine + L-glutamate + ADP + phosphate + H(+). The protein operates within purine metabolism; IMP biosynthesis via de novo pathway; 5-amino-1-(5-phospho-D-ribosyl)imidazole from N(2)-formyl-N(1)-(5-phospho-D-ribosyl)glycinamide: step 1/2. Functionally, phosphoribosylformylglycinamidine synthase involved in the purines biosynthetic pathway. Catalyzes the ATP-dependent conversion of formylglycinamide ribonucleotide (FGAR) and glutamine to yield formylglycinamidine ribonucleotide (FGAM) and glutamate. This is Phosphoribosylformylglycinamidine synthase (PFAS) from Homo sapiens (Human).